The following is a 95-amino-acid chain: Putative protein RDUR (95 aa).

Over residues 1–12 the composition is skewed to basic and acidic residues; it reads MNNSFNKEDRMS. A disordered region spans residues 1 to 20; the sequence is MNNSFNKEDRMSSDTMVGSC.

Its function is as follows. Could play a role in innate immunity against viruses. This is Putative protein RDUR from Homo sapiens (Human).